The following is a 160-amino-acid chain: Protein Vago (160 aa).

The first 23 residues, 1–23, serve as a signal peptide directing secretion; it reads MESISSMIYLVAMMSLIIGGSQA.

Expressed in fat body.

Its subcellular location is the secreted. Probably involved in the antiviral immune response. May have a role in controlling viral load in the adult fat body, after infection with viruses such as the Drosophila C virus. The polypeptide is Protein Vago (Drosophila melanogaster (Fruit fly)).